A 944-amino-acid polypeptide reads, in one-letter code: Nonsense-mediated mRNA decay factor SMG8 (944 aa).

Disordered stretches follow at residues 559 to 601 (LNNG…SNCC) and 629 to 654 (ASSE…TDNE). Residues 568–589 (QDEDAEEDEAEEEEGQEQEQPT) show a composition bias toward acidic residues. The span at 629 to 640 (ASSEQLLNSEQN) shows a compositional bias: polar residues. Low complexity predominate over residues 641 to 650 (TTSSGTSSAD).

This sequence belongs to the SMG8 family.

Its function is as follows. Involved in nonsense-mediated decay (NMD) of mRNAs containing premature stop codons. Probable component of kinase complex containing nonC and recruited to stalled ribosomes. The protein is Nonsense-mediated mRNA decay factor SMG8 of Drosophila melanogaster (Fruit fly).